The chain runs to 37 residues: Large ribosomal subunit protein bL36 (37 aa).

The protein belongs to the bacterial ribosomal protein bL36 family.

The polypeptide is Large ribosomal subunit protein bL36 (Desulfotalea psychrophila (strain LSv54 / DSM 12343)).